The chain runs to 128 residues: Small ribosomal subunit protein uS11 (128 aa).

This sequence belongs to the universal ribosomal protein uS11 family. As to quaternary structure, part of the 30S ribosomal subunit. Interacts with proteins S7 and S18. Binds to IF-3.

In terms of biological role, located on the platform of the 30S subunit, it bridges several disparate RNA helices of the 16S rRNA. Forms part of the Shine-Dalgarno cleft in the 70S ribosome. In Vesicomyosocius okutanii subsp. Calyptogena okutanii (strain HA), this protein is Small ribosomal subunit protein uS11.